An 858-amino-acid chain; its full sequence is Bifunctional uridylyltransferase/uridylyl-removing enzyme (858 aa).

The interval 1-324 (MSASVAEPPP…PATSGVTRVL (324 aa)) is uridylyltransferase. The tract at residues 325–681 (SPGRFVEKQG…ARPSPVGDAL (357 aa)) is uridylyl-removing. Positions 443-565 (VDQHILMVLR…VGSERRLTAL (123 aa)) constitute an HD domain. 2 consecutive ACT domains span residues 682 to 761 (QVLV…PEPS) and 790 to 858 (ILSV…AIAV).

The protein belongs to the GlnD family. Requires Mg(2+) as cofactor.

The enzyme catalyses [protein-PII]-L-tyrosine + UTP = [protein-PII]-uridylyl-L-tyrosine + diphosphate. It carries out the reaction [protein-PII]-uridylyl-L-tyrosine + H2O = [protein-PII]-L-tyrosine + UMP + H(+). Uridylyltransferase (UTase) activity is inhibited by glutamine, while glutamine activates uridylyl-removing (UR) activity. In terms of biological role, modifies, by uridylylation and deuridylylation, the PII regulatory proteins (GlnB and homologs), in response to the nitrogen status of the cell that GlnD senses through the glutamine level. Under low glutamine levels, catalyzes the conversion of the PII proteins and UTP to PII-UMP and PPi, while under higher glutamine levels, GlnD hydrolyzes PII-UMP to PII and UMP (deuridylylation). Thus, controls uridylylation state and activity of the PII proteins, and plays an important role in the regulation of nitrogen assimilation and metabolism. The protein is Bifunctional uridylyltransferase/uridylyl-removing enzyme of Burkholderia pseudomallei (strain 1106a).